The primary structure comprises 182 residues: Bis(5'-nucleosyl)-tetraphosphatase [asymmetrical] (182 aa).

The HIT domain maps to 3–110; sequence KQLYFSKFPV…IPRKKADFSE (108 aa). Residues N28, Q84, and 90 to 93 contribute to the substrate site; that span reads GQTV. Residues 95–99 carry the Histidine triad motif motif; the sequence is HVHVH. H97 acts as the Tele-AMP-histidine intermediate in catalysis. Substrate is bound at residue H99. The disordered stretch occupies residues 135-161; the sequence is RYAGDERPPTSMRQAIPKDEDRKPRTL. Over residues 150 to 161 the composition is skewed to basic and acidic residues; the sequence is IPKDEDRKPRTL.

The enzyme catalyses P(1),P(4)-bis(5'-guanosyl) tetraphosphate + H2O = GMP + GTP + 2 H(+). Its function is as follows. Asymmetrically hydrolyzes Ap4A to yield AMP and ATP. The polypeptide is Bis(5'-nucleosyl)-tetraphosphatase [asymmetrical] (aph1) (Schizosaccharomyces pombe (strain 972 / ATCC 24843) (Fission yeast)).